Here is a 163-residue protein sequence, read N- to C-terminus: MAKESSFDIVSKVEFPEVQNAIQMTLKEIGTRYDFKGSKSDVTLEKEELVLISDDEFKLNQLKDVLSGKLIKRDVPTKNIEYGKIENASGGTVRQRAKLVQGIDKDNAKKINAVIKNSGLKVKSQIQDDQVRVTGKNKDDLQQIIAAVRGADLPIDVQFINFR.

This sequence belongs to the YajQ family.

Its function is as follows. Nucleotide-binding protein. This is Nucleotide-binding protein RBAM_011030 from Bacillus velezensis (strain DSM 23117 / BGSC 10A6 / LMG 26770 / FZB42) (Bacillus amyloliquefaciens subsp. plantarum).